The chain runs to 1484 residues: Chromatin remodeling regulator CECR2 (1484 aa).

The tract at residues 170 to 241 (VQGKSNGELS…RHGSQGPGQG (72 aa)) is disordered. Over residues 197–209 (TGKRRGRPPKRKK) the composition is skewed to basic residues. Positions 210-222 (LQEEILLSEKQEE) are enriched in basic and acidic residues. The segment covering 223 to 234 (NSLASEPQTRHG) has biased composition (polar residues). At Ser422 the chain carries Phosphoserine. In terms of domain architecture, Bromo spans 434–538 (FELDDDFTAM…RCFHRAMMKH (105 aa)). Position 546 is a phosphothreonine (Thr546). Disordered regions lie at residues 556–704 (EKRE…GPRL), 796–825 (GNHGATNQGPLGPDEKPHLGPGPSHQPRTL), 919–1053 (GVPY…SYPG), 1165–1259 (VMGG…LFSD), 1287–1320 (AKVPNDGQNPGPEEEKLDESMERPESPKEFLDLD), and 1442–1484 (YRPS…LDQS). Ser571 is subject to Phosphoserine. A compositionally biased stretch (low complexity) spans 605 to 614 (SSGDDQSSSS). Ser1014 bears the Phosphoserine mark. Asymmetric dimethylarginine is present on residues Arg1197 and Arg1203. Residues 1243-1254 (SGPPASQPPPPR) are compositionally biased toward pro residues. Positions 1304-1320 (DESMERPESPKEFLDLD) are enriched in basic and acidic residues. At Ser1312 the chain carries Phosphoserine. Residues 1451–1469 (PVQSQASFPKTPTAATSQE) show a composition bias toward polar residues. A compositionally biased stretch (pro residues) spans 1474–1484 (HKPPTLPLDQS).

Component of the CERF-1 ISWI chromatin remodeling complex (also called the CECR2-containing remodeling factor (CERF) complex) at least composed of CECR2 and SMARCA1. Component of the CERF-5 ISWI chromatin remodeling complex at least composed of SMARCA5/SNF2H and CECR2. LUZP1 is detected as part of the CERF-1 and CERF-5 complexes in embryonic stem (ES) cells where it is involved in complex stabilization but is not detected in the complexes in the testis. Interacts with CCAR2; CCAR2 may form part of the CERF-1 and/or CEF-5 ISWI chromatin remodeling complexes in ES cells. Interacts with acetylated lysine residues on histone H2A and H3 (in vitro). Interacts with LRPPRC. As to expression, highly expressed in skeletal muscle, thymus, placenta and lung. Expressed at lower level in brain, heart, colon, spleen, kidney.

The protein localises to the nucleus. In terms of biological role, regulatory subunit of the ATP-dependent CERF-1 and CERF-5 ISWI chromatin remodeling complexes, which form ordered nucleosome arrays on chromatin and facilitate access to DNA during DNA-templated processes such as DNA replication, transcription, and repair. The complexes do not have the ability to slide mononucleosomes to the center of a DNA template. The CERF-1 ISWI chromatin remodeling complex has a lower ATP hydrolysis rate than the CERF-5 ISWI chromatin remodeling complex. Plays a role in various processes during development: required during embryogenesis for neural tube closure and inner ear development. In adults, required for spermatogenesis, via the formation of ISWI-type chromatin complexes. In histone-modifying complexes, CECR2 recognizes and binds acylated histones: binds histones that are acetylated and/or butyrylated. May also be involved through its interaction with LRPPRC in the integration of cytoskeletal network with vesicular trafficking, nucleocytosolic shuttling, transcription, chromosome remodeling and cytokinesis. This chain is Chromatin remodeling regulator CECR2 (CECR2), found in Homo sapiens (Human).